Consider the following 390-residue polypeptide: 8-amino-7-oxononanoate synthase (390 aa).

Residue Arg20 coordinates substrate. 107–108 (GF) contributes to the pyridoxal 5'-phosphate binding site. His132 is a binding site for substrate. Pyridoxal 5'-phosphate contacts are provided by residues Ser179, 204–207 (DDAH), and 235–238 (TLSK). Position 238 is an N6-(pyridoxal phosphate)lysine (Lys238). Residue Thr352 coordinates substrate.

It belongs to the class-II pyridoxal-phosphate-dependent aminotransferase family. BioF subfamily. As to quaternary structure, homodimer. Pyridoxal 5'-phosphate serves as cofactor.

It catalyses the reaction 6-carboxyhexanoyl-[ACP] + L-alanine + H(+) = (8S)-8-amino-7-oxononanoate + holo-[ACP] + CO2. It participates in cofactor biosynthesis; biotin biosynthesis. Catalyzes the decarboxylative condensation of pimeloyl-[acyl-carrier protein] and L-alanine to produce 8-amino-7-oxononanoate (AON), [acyl-carrier protein], and carbon dioxide. The sequence is that of 8-amino-7-oxononanoate synthase from Exiguobacterium sibiricum (strain DSM 17290 / CCUG 55495 / CIP 109462 / JCM 13490 / 255-15).